A 245-amino-acid polypeptide reads, in one-letter code: Carbohydrate deacetylase (245 aa).

Mg(2+) is bound by residues His61 and His122.

The protein belongs to the YdjC deacetylase family. Requires Mg(2+) as cofactor.

In terms of biological role, probably catalyzes the deacetylation of acetylated carbohydrates an important step in the degradation of oligosaccharides. This Geobacillus stearothermophilus (Bacillus stearothermophilus) protein is Carbohydrate deacetylase (celC).